The following is a 499-amino-acid chain: Apolipoprotein N-acyltransferase (499 aa).

Helical transmembrane passes span 18 to 38 (FSPY…LIIT), 50 to 70 (LGFL…YISI), 82 to 102 (IIII…FVIL), 105 to 125 (FFFP…AWMI), 156 to 176 (PIIG…MCVL), and 182 to 202 (SYYP…LNFF). One can recognise a CN hydrolase domain in the interval 217–461 (IQGNISQHTY…NDFLLEEVFS (245 aa)). The Proton acceptor role is filled by Glu257. Lys320 is a catalytic residue. The Nucleophile role is filled by Cys372. Residues 476–496 (LLFFSIICFIISFFIKIKLIF) traverse the membrane as a helical segment.

It belongs to the CN hydrolase family. Apolipoprotein N-acyltransferase subfamily.

It localises to the cell membrane. The catalysed reaction is N-terminal S-1,2-diacyl-sn-glyceryl-L-cysteinyl-[lipoprotein] + a glycerophospholipid = N-acyl-S-1,2-diacyl-sn-glyceryl-L-cysteinyl-[lipoprotein] + a 2-acyl-sn-glycero-3-phospholipid + H(+). It participates in protein modification; lipoprotein biosynthesis (N-acyl transfer). In terms of biological role, catalyzes the phospholipid dependent N-acylation of the N-terminal cysteine of apolipoprotein, the last step in lipoprotein maturation. This Wigglesworthia glossinidia brevipalpis protein is Apolipoprotein N-acyltransferase.